The primary structure comprises 691 residues: Protein 4.2 (691 aa).

Gly2 is lipidated: N-myristoyl glycine. The segment at 31–39 (LFVRRGQPF) is band 3 binding. A Phosphoserine; by PKA modification is found at Ser248.

Belongs to the transglutaminase superfamily. Transglutaminase family. In terms of assembly, component of the ankyrin-1 complex in the erythrocyte, composed of ANK1, RHCE, RHAG, SLC4A1, EPB42, GYPA, GYPB and AQP1. Interacts with SLC4A1 (via the cytoplasmic domain); this interaction is mediated by the SLC4A1 Band 3-I dimer. Interacts with ANK1 (via ANK 1-13 repeats). Interacts with AQP1 (via the C-terminal). Post-translationally, both cAMP-dependent kinase (CAPK) and another kinase present in the red-blood cells seem to be able to phosphorylate EPB42.

It localises to the cell membrane. The protein localises to the cytoplasm. The protein resides in the cytoskeleton. In terms of biological role, component of the ankyrin-1 complex, a multiprotein complex involved in the stability and shape of the erythrocyte membrane. This Homo sapiens (Human) protein is Protein 4.2.